A 149-amino-acid polypeptide reads, in one-letter code: Calmodulin (149 aa).

Alanine 2 carries the post-translational modification N-acetylalanine. EF-hand domains follow at residues 8–43 (EQISEFKEAFSLFDKDGDGTITTKELGTVMRSLGQN), 44–79 (PTEAELQDMINEIDTDGNGTIDFPEFLTLMARKLKD), 81–116 (DTEEELIEAFRVFDRDGDGYISADELRHVMTNLGEK), and 117–149 (LTNEEVDEMIREADIDGDGQINYEEFVKMMIAK). Ca(2+)-binding residues include aspartate 21, aspartate 23, aspartate 25, threonine 27, glutamate 32, aspartate 57, aspartate 59, asparagine 61, threonine 63, glutamate 68, aspartate 94, aspartate 96, aspartate 98, tyrosine 100, glutamate 105, aspartate 130, aspartate 132, aspartate 134, glutamine 136, and glutamate 141.

This sequence belongs to the calmodulin family.

It is found in the cytoplasm. Functionally, calmodulin mediates the control of a large number of enzymes, ion channels and other proteins by Ca(2+). Among the enzymes to be stimulated by the calmodulin-Ca(2+) complex are a number of protein kinases and phosphatases. The sequence is that of Calmodulin from Plasmodium falciparum (isolate 3D7).